The sequence spans 280 residues: Pantothenate synthetase (280 aa).

26–33 serves as a coordination point for ATP; that stretch reads MGNLHEGH. H33 acts as the Proton donor in catalysis. Position 57 (Q57) interacts with (R)-pantoate. Residue Q57 participates in beta-alanine binding. Residue 145–148 coordinates ATP; that stretch reads GKKD. Q151 is a binding site for (R)-pantoate. ATP is bound by residues V174 and 182-185; that span reads LSSR.

This sequence belongs to the pantothenate synthetase family. As to quaternary structure, homodimer.

The protein localises to the cytoplasm. The enzyme catalyses (R)-pantoate + beta-alanine + ATP = (R)-pantothenate + AMP + diphosphate + H(+). It functions in the pathway cofactor biosynthesis; (R)-pantothenate biosynthesis; (R)-pantothenate from (R)-pantoate and beta-alanine: step 1/1. Its function is as follows. Catalyzes the condensation of pantoate with beta-alanine in an ATP-dependent reaction via a pantoyl-adenylate intermediate. The chain is Pantothenate synthetase from Bordetella avium (strain 197N).